Consider the following 167-residue polypeptide: CDP-archaeol synthase (167 aa).

Transmembrane regions (helical) follow at residues 4–24 (ILEAFWYILPAYFANSSPVIL), 51–71 (GFLGGLTVGTLIGVIQQIIYP), 80–100 (FKVSFLLALGALVGDLIGSFI), 104–124 (LNLPPGYPAVGLDQWGFLISA), and 139–158 (VLLLLVVTPLIHWGTNVLAY).

The protein belongs to the CDP-archaeol synthase family. Mg(2+) is required as a cofactor.

Its subcellular location is the cell membrane. The catalysed reaction is 2,3-bis-O-(geranylgeranyl)-sn-glycerol 1-phosphate + CTP + H(+) = CDP-2,3-bis-O-(geranylgeranyl)-sn-glycerol + diphosphate. The protein operates within membrane lipid metabolism; glycerophospholipid metabolism. Its function is as follows. Catalyzes the formation of CDP-2,3-bis-(O-geranylgeranyl)-sn-glycerol (CDP-archaeol) from 2,3-bis-(O-geranylgeranyl)-sn-glycerol 1-phosphate (DGGGP) and CTP. This reaction is the third ether-bond-formation step in the biosynthesis of archaeal membrane lipids. The chain is CDP-archaeol synthase from Pyrococcus furiosus (strain ATCC 43587 / DSM 3638 / JCM 8422 / Vc1).